A 132-amino-acid polypeptide reads, in one-letter code: Small ribosomal subunit protein uS8 (132 aa).

The protein belongs to the universal ribosomal protein uS8 family. As to quaternary structure, part of the 30S ribosomal subunit. Contacts proteins S5 and S12.

Functionally, one of the primary rRNA binding proteins, it binds directly to 16S rRNA central domain where it helps coordinate assembly of the platform of the 30S subunit. This Clostridium beijerinckii (strain ATCC 51743 / NCIMB 8052) (Clostridium acetobutylicum) protein is Small ribosomal subunit protein uS8.